The sequence spans 388 residues: MLELIYILPLLCFVYFLFRRFVLENFYVESSGKYVMITGCDSGFGRLLATSLLDKHVNVFAACFTQQGMASLHSEWKLKKGPKGQLYTLQLDVTSQASVDSAKSFVTKILKEQNSKLWGLVNNAGIFSIHGPDDWCSVDEYASSLNVNTLGAVRMCHAFVPLIKKSRGRIVTMGSTAGRLHGLYVAPYVTAKFAVEAYMDCLRLEMRPFGVSVHILEPGCFKTELLNNDAQRMRIQKIWNSLSVETKEEYGEDYRNDFERAWEAGVNVVANPNIGWVVDCYSHALFSWWPRLRYCPGWDAIFMFIPLSIFPTALQDWILAGLYKLNPGPSLTPAVLVKNKKRRSAIQWIQFLSQIAIIPLLYTIFFVKNTQKQTVETSTHHHNVTVSE.

Residues 2–22 (LELIYILPLLCFVYFLFRRFV) form a helical membrane-spanning segment. Tyr-188 serves as the catalytic Proton acceptor. 2 helical membrane-spanning segments follow: residues 300-320 (AIFMFIPLSIFPTALQDWILA) and 346-366 (IQWIQFLSQIAIIPLLYTIFF).

This sequence belongs to the short-chain dehydrogenases/reductases (SDR) family. Strongly expressed in the hypodermis and posterior pharyngeal bulb and in a number of unidentified neurons of the head and tail.

It localises to the membrane. The catalysed reaction is lathosterol + NAD(+) = 5alpha-cholest-7-en-3-one + NADH + H(+). The protein operates within steroid hormone biosynthesis; dafachronic acid biosynthesis. 3beta-hydroxysteroid dehydrogenase that converts 3beta-hydroxysteroids to 3-ketosteroids, an essential step in the production of dafachronic acids from cholesterol. Catalyzes the dehydrogenation of lathosterol (5alpha-cholest-7-en-3beta-ol) to lathosterone (5alpha-cholest-7-en-3-one), a step required for maximal biosynthesis of Delta(7)-dafachronic acid. Dafachronic acids act as ligands and bind directly to the nuclear hormone receptor (NHR) daf-12, suppressing dauer formation and inducing reproductive growth, they can also regulate C.elegans lifespan. This Caenorhabditis elegans protein is 3beta-hydroxysteroid dehydrogenase dhs-16 (dhs-16).